The primary structure comprises 382 residues: Mannitol-1-phosphate 5-dehydrogenase (382 aa).

NAD(+) is bound at residue 3-14 (ALHFGAGNIGRG). Lys-269 carries the post-translational modification N6-acetyllysine.

The protein belongs to the mannitol dehydrogenase family.

It carries out the reaction D-mannitol 1-phosphate + NAD(+) = beta-D-fructose 6-phosphate + NADH + H(+). The chain is Mannitol-1-phosphate 5-dehydrogenase from Escherichia coli O17:K52:H18 (strain UMN026 / ExPEC).